The primary structure comprises 325 residues: MSETATWQPSAPIPNLLKRAAVMAEIRRFFTDRGVLEVETPCMSQATVTDIHLFPFETRFVGPGHSQGLNLYLMTSPEYHMKRLLAAGCGPVFQLCRSFRNEEMGRHHNPEFTMLEWYRPCYDMYRLINEVDDLLQQVLECQPAESLSYQQAFQRHLEIDPLSADKAQLREVAAKLDLSNIADTEEDRDTLLQLLFTMGVEPHIGKDRPTFIYHFPATQASLAQISPEDHRVAERFEVYYKGIELANGFHELTDAHEQRLRFEQDNRKRAARGLPQQPIDNNLLAALEAGLPDCSGVALGVDRVVMLALGAESIGEVIAFTVDRA.

Residue 76–78 (SPE) coordinates substrate. ATP-binding positions include 100–102 (RNE) and asparagine 109. Tyrosine 118 contributes to the substrate binding site. 244–245 (EL) lines the ATP pocket. Glutamate 251 provides a ligand contact to substrate. An ATP-binding site is contributed by glycine 300.

The protein belongs to the class-II aminoacyl-tRNA synthetase family. EpmA subfamily. As to quaternary structure, homodimer.

It catalyses the reaction D-beta-lysine + L-lysyl-[protein] + ATP = N(6)-((3R)-3,6-diaminohexanoyl)-L-lysyl-[protein] + AMP + diphosphate + H(+). Functionally, with EpmB is involved in the beta-lysylation step of the post-translational modification of translation elongation factor P (EF-P). Catalyzes the ATP-dependent activation of (R)-beta-lysine produced by EpmB, forming a lysyl-adenylate, from which the beta-lysyl moiety is then transferred to the epsilon-amino group of a conserved specific lysine residue in EF-P. In Klebsiella pneumoniae subsp. pneumoniae (strain ATCC 700721 / MGH 78578), this protein is Elongation factor P--(R)-beta-lysine ligase.